Here is a 320-residue protein sequence, read N- to C-terminus: Probable protein adenylyltransferase aq_aa38 (320 aa).

A Fido domain is found at 76 to 206; the sequence is VSEALILWIY…AIVVVEKLSR (131 aa). ATP-binding positions include 100-101, 157-159, and R163; these read KS and GNG.

The protein belongs to the fic family.

It catalyses the reaction L-tyrosyl-[protein] + ATP = O-(5'-adenylyl)-L-tyrosyl-[protein] + diphosphate. The enzyme catalyses L-threonyl-[protein] + ATP = 3-O-(5'-adenylyl)-L-threonyl-[protein] + diphosphate. Functionally, probable adenylyltransferase that mediates the addition of adenosine 5'-monophosphate (AMP) to specific residues of target proteins. This Aquifex aeolicus (strain VF5) protein is Probable protein adenylyltransferase aq_aa38.